Reading from the N-terminus, the 92-residue chain is Parbolysin P7 (92 aa).

Cystine bridges form between Cys15-Cys36, Cys21-Cys32, and Cys46-Cys59.

It belongs to the worm cytolysin family. Localized within the skin and proboscis and are most readily isolated from body mucus secretions.

It localises to the secreted. Its function is as follows. Cytolysin that shows hemolytic activity (on bovine erythrocytes, HC(50)=5.75 mg/ml). This hemolytic activity is completely inhibited by small unilamelar vesicles composed of PC/PG, PC/PI and PC/PS in 1:1 molar ratios (with at least 100 mg/ml concentration). The sequence is that of Parbolysin P7 from Parborlasia corrugatus (Antarctic nemertean worm).